The primary structure comprises 400 residues: Formate-dependent phosphoribosylglycinamide formyltransferase (400 aa).

Residues 22–23 (EL) and E82 contribute to the N(1)-(5-phospho-beta-D-ribosyl)glycinamide site. ATP-binding positions include R115, K157, 162–167 (SSGKGQ), 197–200 (EGFV), and E205. The region spanning 120-315 (RLAAETLGVP…EFELHARAIL (196 aa)) is the ATP-grasp domain. E274 and E286 together coordinate Mg(2+). Residues D293, K362, and 369 to 370 (RR) contribute to the N(1)-(5-phospho-beta-D-ribosyl)glycinamide site.

Belongs to the PurK/PurT family. As to quaternary structure, homodimer.

It catalyses the reaction N(1)-(5-phospho-beta-D-ribosyl)glycinamide + formate + ATP = N(2)-formyl-N(1)-(5-phospho-beta-D-ribosyl)glycinamide + ADP + phosphate + H(+). Its pathway is purine metabolism; IMP biosynthesis via de novo pathway; N(2)-formyl-N(1)-(5-phospho-D-ribosyl)glycinamide from N(1)-(5-phospho-D-ribosyl)glycinamide (formate route): step 1/1. Its function is as follows. Involved in the de novo purine biosynthesis. Catalyzes the transfer of formate to 5-phospho-ribosyl-glycinamide (GAR), producing 5-phospho-ribosyl-N-formylglycinamide (FGAR). Formate is provided by PurU via hydrolysis of 10-formyl-tetrahydrofolate. This is Formate-dependent phosphoribosylglycinamide formyltransferase from Mycolicibacterium smegmatis (strain ATCC 700084 / mc(2)155) (Mycobacterium smegmatis).